A 343-amino-acid chain; its full sequence is Ribosomal RNA small subunit methyltransferase C (343 aa).

This sequence belongs to the methyltransferase superfamily. RsmC family. As to quaternary structure, monomer.

The protein localises to the cytoplasm. The enzyme catalyses guanosine(1207) in 16S rRNA + S-adenosyl-L-methionine = N(2)-methylguanosine(1207) in 16S rRNA + S-adenosyl-L-homocysteine + H(+). Specifically methylates the guanine in position 1207 of 16S rRNA in the 30S particle. The chain is Ribosomal RNA small subunit methyltransferase C from Escherichia coli O17:K52:H18 (strain UMN026 / ExPEC).